Reading from the N-terminus, the 254-residue chain is Alcohol dehydrogenase (254 aa).

10–33 (FVAGLGGIGLDTSREIVKSGPKNL) is a binding site for NAD(+). Ser138 contributes to the substrate binding site. The active-site Proton acceptor is the Tyr151.

This sequence belongs to the short-chain dehydrogenases/reductases (SDR) family. In terms of assembly, homodimer.

It catalyses the reaction a primary alcohol + NAD(+) = an aldehyde + NADH + H(+). The catalysed reaction is a secondary alcohol + NAD(+) = a ketone + NADH + H(+). In Drosophila picticornis (Fruit fly), this protein is Alcohol dehydrogenase (Adh).